The following is a 292-amino-acid chain: Hemin import ATP-binding protein HmuV (292 aa).

Residues 38–271 (LRADGIAVTR…ELLTRVYGHP (234 aa)) enclose the ABC transporter domain. An ATP-binding site is contributed by 70–77 (GPNGAGKS).

Belongs to the ABC transporter superfamily. Heme (hemin) importer (TC 3.A.1.14.5) family. In terms of assembly, the complex is composed of two ATP-binding proteins (HmuV), two transmembrane proteins (HmuU) and a solute-binding protein (HmuT).

It is found in the cell membrane. Its function is as follows. Part of the ABC transporter complex HmuTUV involved in hemin import. Responsible for energy coupling to the transport system. The chain is Hemin import ATP-binding protein HmuV from Rhodococcus jostii (strain RHA1).